Consider the following 143-residue polypeptide: Transcriptional regulator MraZ (143 aa).

SpoVT-AbrB domains follow at residues 5-47 and 76-119; these read EFRH…PMNE and ASEC…SQEK.

This sequence belongs to the MraZ family. Forms oligomers.

The protein localises to the cytoplasm. It localises to the nucleoid. In Natranaerobius thermophilus (strain ATCC BAA-1301 / DSM 18059 / JW/NM-WN-LF), this protein is Transcriptional regulator MraZ.